The primary structure comprises 282 residues: Para-Rep C1 (282 aa).

The CRESS-DNA virus Rep endonuclease domain maps to 1 to 99 (MASKRWCFTL…ETLISEIGAP (99 aa)). The RCR-1 signature appears at 7 to 10 (CFTL). Positions 38 and 47 each coordinate a divalent metal cation. Residues 47–49 (HLQ) carry the RCR-2 motif. The Nuclear localization signal signature appears at 56-77 (KMIRLGGLKKKFGYRAHWEIAK). Tyr86 functions as the For DNA cleavage activity in the catalytic mechanism. The RCR-3 motif lies at 86 to 89 (YCTK). Ser94 contributes to the a divalent metal cation binding site. Residue 174–182 (GSDGGEGKS) participates in ATP binding.

The protein belongs to the nanoviridea/circoviridae replication-associated protein family. Homooligomer (Potential). Rep binds to repeated DNA motifs (iterons). Mg(2+) serves as cofactor. The cofactor is Mn(2+).

The protein localises to the host nucleus. The enzyme catalyses ATP + H2O = ADP + phosphate + H(+). Its function is as follows. Initiates and terminates the replication only of its own subviral DNA molecule. The closed circular ssDNA genome is first converted to a superhelical dsDNA. Rep binds a specific hairpin at the genome origin of replication. Introduces an endonucleolytic nick within the intergenic region of the genome, thereby initiating the rolling circle replication (RCR). Following cleavage, binds covalently to the 5'-phosphate of DNA as a tyrosyl ester. The cleavage gives rise to a free 3'-OH that serves as a primer for the cellular DNA polymerase. The polymerase synthesizes the (+) strand DNA by rolling circle mechanism. After one round of replication, a Rep-catalyzed nucleotidyl transfer reaction releases a circular single-stranded virus genome, thereby terminating the replication. Displays origin-specific DNA cleavage, nucleotidyl transferase, ATPase and helicase activities. This chain is Para-Rep C1 (C1), found in Faba bean necrotic yellows C11 alphasatellite (FBNYC11A).